We begin with the raw amino-acid sequence, 384 residues long: Carbamoyl phosphate synthase small chain (384 aa).

Positions 1 to 189 (MSKSALLVLE…GLPEAKDDSE (189 aa)) are CPSase. S47, G241, and G243 together coordinate L-glutamine. The 188-residue stretch at 193 to 380 (HVVAYDFGAK…IELIKLSVNE (188 aa)) folds into the Glutamine amidotransferase type-1 domain. The Nucleophile role is filled by C269. Residues L270, Q273, N311, G313, and F314 each contribute to the L-glutamine site. Residues H353 and E355 contribute to the active site.

This sequence belongs to the CarA family. As to quaternary structure, composed of two chains; the small (or glutamine) chain promotes the hydrolysis of glutamine to ammonia, which is used by the large (or ammonia) chain to synthesize carbamoyl phosphate. Tetramer of heterodimers (alpha,beta)4.

The catalysed reaction is hydrogencarbonate + L-glutamine + 2 ATP + H2O = carbamoyl phosphate + L-glutamate + 2 ADP + phosphate + 2 H(+). It catalyses the reaction L-glutamine + H2O = L-glutamate + NH4(+). It functions in the pathway amino-acid biosynthesis; L-arginine biosynthesis; carbamoyl phosphate from bicarbonate: step 1/1. It participates in pyrimidine metabolism; UMP biosynthesis via de novo pathway; (S)-dihydroorotate from bicarbonate: step 1/3. In terms of biological role, small subunit of the glutamine-dependent carbamoyl phosphate synthetase (CPSase). CPSase catalyzes the formation of carbamoyl phosphate from the ammonia moiety of glutamine, carbonate, and phosphate donated by ATP, constituting the first step of 2 biosynthetic pathways, one leading to arginine and/or urea and the other to pyrimidine nucleotides. The small subunit (glutamine amidotransferase) binds and cleaves glutamine to supply the large subunit with the substrate ammonia. The chain is Carbamoyl phosphate synthase small chain from Photobacterium profundum (strain SS9).